Reading from the N-terminus, the 174-residue chain is Small ribosomal subunit protein uS7c (174 aa).

This sequence belongs to the universal ribosomal protein uS7 family. Part of the 30S ribosomal subunit.

The protein resides in the plastid. Its subcellular location is the chloroplast. Functionally, one of the primary rRNA binding proteins, it binds directly to 16S rRNA where it nucleates assembly of the head domain of the 30S subunit. The sequence is that of Small ribosomal subunit protein uS7c (rps7) from Stigeoclonium helveticum (Green alga).